Reading from the N-terminus, the 132-residue chain is Small ribosomal subunit protein uS8 (132 aa).

Belongs to the universal ribosomal protein uS8 family. As to quaternary structure, part of the 30S ribosomal subunit. Contacts proteins S5 and S12.

In terms of biological role, one of the primary rRNA binding proteins, it binds directly to 16S rRNA central domain where it helps coordinate assembly of the platform of the 30S subunit. This Granulibacter bethesdensis (strain ATCC BAA-1260 / CGDNIH1) protein is Small ribosomal subunit protein uS8.